We begin with the raw amino-acid sequence, 547 residues long: Chaperonin GroEL (547 aa).

ATP contacts are provided by residues 30-33 (TLGP), Lys51, 87-91 (DGTTT), Gly415, 479-481 (NAA), and Asp495.

It belongs to the chaperonin (HSP60) family. In terms of assembly, forms a cylinder of 14 subunits composed of two heptameric rings stacked back-to-back. Interacts with the co-chaperonin GroES.

Its subcellular location is the cytoplasm. The enzyme catalyses ATP + H2O + a folded polypeptide = ADP + phosphate + an unfolded polypeptide.. In terms of biological role, together with its co-chaperonin GroES, plays an essential role in assisting protein folding. The GroEL-GroES system forms a nano-cage that allows encapsulation of the non-native substrate proteins and provides a physical environment optimized to promote and accelerate protein folding. The sequence is that of Chaperonin GroEL from Pseudomonas aeruginosa (strain UCBPP-PA14).